Consider the following 442-residue polypeptide: tRNA-2-methylthio-N(6)-dimethylallyladenosine synthase (442 aa).

An MTTase N-terminal domain is found at 6–122 (RKFYIHTFGC…LPVLIAEAGK (117 aa)). Cysteine 15, cysteine 51, cysteine 85, cysteine 157, cysteine 161, and cysteine 164 together coordinate [4Fe-4S] cluster. The region spanning 143–373 (RTQSLTAFVP…IDLQNGISAE (231 aa)) is the Radical SAM core domain. The region spanning 376 to 439 (RLAIGSVVEV…SATLIGRAAE (64 aa)) is the TRAM domain.

This sequence belongs to the methylthiotransferase family. MiaB subfamily. Monomer. It depends on [4Fe-4S] cluster as a cofactor.

The protein resides in the cytoplasm. It catalyses the reaction N(6)-dimethylallyladenosine(37) in tRNA + (sulfur carrier)-SH + AH2 + 2 S-adenosyl-L-methionine = 2-methylsulfanyl-N(6)-dimethylallyladenosine(37) in tRNA + (sulfur carrier)-H + 5'-deoxyadenosine + L-methionine + A + S-adenosyl-L-homocysteine + 2 H(+). Catalyzes the methylthiolation of N6-(dimethylallyl)adenosine (i(6)A), leading to the formation of 2-methylthio-N6-(dimethylallyl)adenosine (ms(2)i(6)A) at position 37 in tRNAs that read codons beginning with uridine. The protein is tRNA-2-methylthio-N(6)-dimethylallyladenosine synthase of Chlorobium limicola (strain DSM 245 / NBRC 103803 / 6330).